The following is a 384-amino-acid chain: Aurora kinase (384 aa).

2 stretches are compositionally biased toward polar residues: residues 1 to 12 (MSYPNNKENSNN) and 19 to 29 (SVPSKQPQRVL). The segment at 1 to 100 (MSYPNNKENS…SSSSSSSQSV (100 aa)) is disordered. Positions 30 to 99 (QQQNTNINNH…SSSSSSSSQS (70 aa)) are enriched in low complexity. Positions 110-360 (FDIGKLLGMG…LKDVINHPWI (251 aa)) constitute a Protein kinase domain. Residues 116–124 (LGMGRFGHV) and Lys139 each bind ATP. The active-site Proton acceptor is the Asp233.

Belongs to the protein kinase superfamily. Ser/Thr protein kinase family. Aurora subfamily. As to quaternary structure, interacts with icpA. Forms a complex at the central spindle.

The protein localises to the cytoplasm. The protein resides in the chromosome. It localises to the centromere. Its subcellular location is the cytoskeleton. It is found in the spindle pole. The protein localises to the cleavage furrow. The protein resides in the cell projection. It localises to the neuron projection. The catalysed reaction is L-seryl-[protein] + ATP = O-phospho-L-seryl-[protein] + ADP + H(+). It carries out the reaction L-threonyl-[protein] + ATP = O-phospho-L-threonyl-[protein] + ADP + H(+). In terms of biological role, part of a chromosomal passenger complex. In Dictyostelium discoideum (Social amoeba), this protein is Aurora kinase (aurK).